The following is a 453-amino-acid chain: 3-phosphoshikimate 1-carboxyvinyltransferase (453 aa).

Residues 1–12 (MDVNVTSSTVRG) are compositionally biased toward polar residues. A disordered region spans residues 1–21 (MDVNVTSSTVRGTTRAPPSKS). Residues Lys-20, Ser-21, and Arg-25 each contribute to the 3-phosphoshikimate site. Lys-20 lines the phosphoenolpyruvate pocket. Residues Gly-97 and Arg-125 each contribute to the phosphoenolpyruvate site. 3-phosphoshikimate is bound by residues Ser-170, Ser-171, Gln-172, Ser-198, Asp-330, and Lys-357. Residue Gln-172 participates in phosphoenolpyruvate binding. Residue Asp-330 is the Proton acceptor of the active site. Phosphoenolpyruvate is bound by residues Arg-361 and Arg-404.

Belongs to the EPSP synthase family. As to quaternary structure, monomer.

The protein resides in the cytoplasm. The catalysed reaction is 3-phosphoshikimate + phosphoenolpyruvate = 5-O-(1-carboxyvinyl)-3-phosphoshikimate + phosphate. It functions in the pathway metabolic intermediate biosynthesis; chorismate biosynthesis. Catalyzes the transfer of the enolpyruvyl moiety of phosphoenolpyruvate (PEP) to the 5-hydroxyl of shikimate-3-phosphate (S3P) to produce enolpyruvyl shikimate-3-phosphate and inorganic phosphate. The chain is 3-phosphoshikimate 1-carboxyvinyltransferase from Halorubrum lacusprofundi (strain ATCC 49239 / DSM 5036 / JCM 8891 / ACAM 34).